The sequence spans 251 residues: MRKEERLEEITKLINKRGTIRVTEVVERLKVSDMTVRRDLTELEGLGVLTRIHGGARSNNIFQYKEMSHEEKHSRQIEEKHYIAQKAAELVEEGDTIFLGPGTTVELLAEEINKTTLQVITNCLPVFQILSQKQSETFRVHLLGGEMRSITQSFIGEITNIVLEKMHFSKMFFSGNGVKGNEVMTSSFQEAYTQKMALGRAIEKYLLIDSSKIGKEDFTSFYQLSQLTALITDCQDDDKLQKLSKYTEIIN.

One can recognise an HTH deoR-type domain in the interval 3–58; that stretch reads KEERLEEITKLINKRGTIRVTEVVERLKVSDMTVRRDLTELEGLGVLTRIHGGARS. The segment at residues 20–39 is a DNA-binding region (H-T-H motif); that stretch reads IRVTEVVERLKVSDMTVRRD.

Functionally, repressor of the lactose catabolism operon. Galactose-6-phosphate is the inducer. The chain is Lactose phosphotransferase system repressor (lacR) from Streptococcus mutans serotype c (strain ATCC 700610 / UA159).